Consider the following 336-residue polypeptide: Ethanol acetyltransferase 1 (336 aa).

The transit peptide at 1–14 (MFPTRVLRSTLQKL) directs the protein to the mitochondrion. One can recognise an AB hydrolase-1 domain in the interval 44–296 (PIVFLHGIFG…VNSSHDILDQ (253 aa)). Catalysis depends on charge relay system residues Ser-117, Asp-141, and His-291.

This sequence belongs to the AB hydrolase superfamily.

The protein resides in the mitochondrion. It catalyses the reaction ethanol + acetyl-CoA = ethyl acetate + CoA. It carries out the reaction acetyl-CoA + H2O = acetate + CoA + H(+). The enzyme catalyses ethyl acetate + H2O = ethanol + acetate + H(+). In terms of biological role, alcohol acetyltransferase that catalyzes the synthesis of ethyl acetate from ethanol and acetyl-CoA. Can also function as a thioesterase by hydrolyzing acetyl-CoA in the absence of ethanol, as well as esterase hydrolyzing ethyl acetate. The chain is Ethanol acetyltransferase 1 (EAT1) from Cyberlindnera jadinii (strain ATCC 18201 / CBS 1600 / BCRC 20928 / JCM 3617 / NBRC 0987 / NRRL Y-1542) (Torula yeast).